The following is a 102-amino-acid chain: Citrate lyase acyl carrier protein (102 aa).

The residue at position 14 (Ser14) is an O-(phosphoribosyl dephospho-coenzyme A)serine.

It belongs to the CitD family. In terms of assembly, oligomer with a subunit composition of (alpha,beta,gamma)6.

It localises to the cytoplasm. Functionally, covalent carrier of the coenzyme of citrate lyase. The sequence is that of Citrate lyase acyl carrier protein from Streptococcus pyogenes serotype M4 (strain MGAS10750).